We begin with the raw amino-acid sequence, 419 residues long: DNA ligase (419 aa).

Positions 1–120 (MLNHFPGHCS…ARQKRGAHTN (120 aa)) are NTD. The AD domain stretch occupies residues 121–317 (TGMIPPMLVK…NYHSAHLAKL (197 aa)). The N6-AMP-lysine intermediate role is filled by Lys151. An OB domain region spans residues 318–419 (KPLLDAEFIL…REPINVLEII (102 aa)).

This sequence belongs to the ATP-dependent DNA ligase family.

Its subcellular location is the virion. It carries out the reaction ATP + (deoxyribonucleotide)n-3'-hydroxyl + 5'-phospho-(deoxyribonucleotide)m = (deoxyribonucleotide)n+m + AMP + diphosphate.. Very low-fidelity DNA ligase that seals nicks in double-stranded DNA during DNA repair. Together with the viral repair DNA polymerase X, fills the single nucleotide gaps generated by the AP endonuclease. It is not essential for viral replication and recombination. Displays a very low adenylation activity towards DNA with 3'-dideoxy- or 3'-amino-terminated nicks compared to regular nick DNA. This is DNA ligase from Ornithodoros (relapsing fever ticks).